The primary structure comprises 360 residues: Peptide chain release factor 1 (360 aa).

At Gln236 the chain carries N5-methylglutamine.

The protein belongs to the prokaryotic/mitochondrial release factor family. In terms of processing, methylated by PrmC. Methylation increases the termination efficiency of RF1.

It localises to the cytoplasm. Peptide chain release factor 1 directs the termination of translation in response to the peptide chain termination codons UAG and UAA. This Limosilactobacillus reuteri subsp. reuteri (strain JCM 1112) (Lactobacillus reuteri) protein is Peptide chain release factor 1.